The following is a 342-amino-acid chain: Cathepsin B-like cysteine proteinase 1 (342 aa).

Residues 1–18 (MKYLVLALCTYLCSQTGA) form the signal peptide. Positions 19–86 (DENAAQGIPL…VKEDPDPEVD (68 aa)) are cleaved as a propeptide — activation peptide. N-linked (GlcNAc...) asparagine glycosylation occurs at Asn-99. 6 disulfides stabilise this stretch: Cys-100–Cys-128, Cys-111–Cys-156, Cys-147–Cys-214, Cys-148–Cys-152, Cys-185–Cys-218, and Cys-193–Cys-205. Cys-114 is a catalytic residue. Asn-138 carries N-linked (GlcNAc...) asparagine glycosylation. Asn-198 carries an N-linked (GlcNAc...) asparagine glycan. Residue His-285 is part of the active site. N-linked (GlcNAc...) asparagine glycosylation occurs at Asn-296. Asn-305 is a catalytic residue.

It belongs to the peptidase C1 family.

Functionally, expression of the protease correlates with blood-feeding and suggests a role for the protease in blood digestion. The sequence is that of Cathepsin B-like cysteine proteinase 1 (AC-1) from Haemonchus contortus (Barber pole worm).